We begin with the raw amino-acid sequence, 154 residues long: Pro-corazonin (154 aa).

Positions 1-19 (MLRLLLLPLFLFTLSMCMG) are cleaved as a signal peptide. Gln20 carries the pyrrolidone carboxylic acid modification. Asparagine amide is present on Asn30. Residues 70-154 (LERCLSQLQR…SAEPNVFGKH (85 aa)) constitute a propeptide that is removed on maturation.

This sequence belongs to the corazonin family. In terms of tissue distribution, expression is restricted to 24 neurons in the larval CNS (8 in the brain and 16 in the ventral nerve cord) and 12-16 neurons in the pars lateralis of the adult brain.

The protein localises to the secreted. Its function is as follows. Cardioactive peptide. Corazonin is probably involved in the physiological regulation of the heart beat. Clock (Clk) and cycle (cyc) proteins negatively regulate Crz transcription in a cell-specific manner. The chain is Pro-corazonin (Crz) from Drosophila erecta (Fruit fly).